Reading from the N-terminus, the 353-residue chain is Membrane lipoprotein TmpC (353 aa).

The N-terminal stretch at 1-20 (MREKWVRAFAGVFCAMLLIG) is a signal peptide. Cys21 is lipidated: N-palmitoyl cysteine. A lipid anchor (S-diacylglycerol cysteine) is attached at Cys21. Asp47 is a guanosine binding site. Asp47 serves as a coordination point for inosine. Residues 47-48 (DS) and Phe56 each bind adenosine. Guanosine-binding residues include Asn57, Asp128, Phe206, Gly232, Asp258, and Lys280. Inosine-binding residues include Asn57 and Asp128. Adenosine is bound by residues Asp128, Phe206, Gly232, Asp258, and Lys280. Inosine-binding residues include Gly232, Asp258, and Lys280.

Belongs to the BMP lipoprotein family. In terms of assembly, monomer.

Its subcellular location is the cell membrane. Functionally, binds purine nucleosides and may play a role in purine nucleoside uptake. May be part of an ABC-type nucleoside uptake system. Has highest affinity for guanosine, followed by inosine and adenosine. Has very low affinity for cytidine and does not bind thymidine. The chain is Membrane lipoprotein TmpC (tmpC) from Treponema pallidum (strain Nichols).